Consider the following 856-residue polypeptide: DNA mismatch repair protein MutS (856 aa).

607-614 (GPNMAGKS) provides a ligand contact to ATP.

This sequence belongs to the DNA mismatch repair MutS family.

In terms of biological role, this protein is involved in the repair of mismatches in DNA. It is possible that it carries out the mismatch recognition step. This protein has a weak ATPase activity. The sequence is that of DNA mismatch repair protein MutS from Cytophaga hutchinsonii (strain ATCC 33406 / DSM 1761 / CIP 103989 / NBRC 15051 / NCIMB 9469 / D465).